Consider the following 269-residue polypeptide: Eukaryotic translation initiation factor 3 subunit G-1 (269 aa).

Positions 188-266 (AAIRISNLSE…LILSVEWSKP (79 aa)) constitute an RRM domain.

The protein belongs to the eIF-3 subunit G family. As to quaternary structure, component of the eukaryotic translation initiation factor 3 (eIF-3) complex. The eIF-3 complex interacts with pix.

The protein resides in the cytoplasm. Functionally, RNA-binding component of the eukaryotic translation initiation factor 3 (eIF-3) complex, which is involved in protein synthesis of a specialized repertoire of mRNAs and, together with other initiation factors, stimulates binding of mRNA and methionyl-tRNAi to the 40S ribosome. The eIF-3 complex specifically targets and initiates translation of a subset of mRNAs involved in cell proliferation. This subunit can bind 18S rRNA. This chain is Eukaryotic translation initiation factor 3 subunit G-1, found in Drosophila mojavensis (Fruit fly).